The chain runs to 789 residues: MTKPAADASAVLTAEDTLVLASTATPVEMELIMGWLGQQRARHPDSKFDILKLPPRNAPPAALTALVEQLEPGFASSPQSGEDRSIVPVRVIWLPPADRSRAGKVAALLPGRDPYHPSQRQQRRILRTDPRRARVVAGESAKVSELRQQWRDTTVAEHKRDFAQFVSRRALLALARAEYRILGPQYKSPRLVKPEMLASARFRAGLDRIPGATVEDAGKMLDELSTGWSQVSVDLVSVLGRLASRGFDPEFDYDEYQVAAMRAALEAHPAVLLFSHRSYIDGVVVPVAMQDNRLPPVHMFGGINLSFGLMGPLMRRSGMIFIRRNIGNDPLYKYVLKEYVGYVVEKRFNLSWSIEGTRSRTGKMLPPKLGLMSYVADAYLDGRSDDILLQGVSICFDQLHEITEYAAYARGAEKTPEGLRWLYNFIKAQGERNFGKIYVRFPEAVSMRQYLGAPHGELTQDPAAKRLALQKMSFEVAWRILQATPVTATGLVSALLLTTRGTALTLDQLHHTLQDSLDYLERKQSPVSTSALRLRSREGVRAAADALSNGHPVTRVDSGREPVWYIAPDDEHAAAFYRNSVIHAFLETSIVELALAHAKHAEGDRVAAFWAQAMRLRDLLKFDFYFADSTAFRANIAQEMAWHQDWEDHLGVGGNEIDAMLYAKRPLMSDAMLRVFFEAYEIVADVLRDAPPDIGPEELTELALGLGRQFVAQGRVRSSEPVSTLLFATARQVAVDQELIAPAADLAERRVAFRRELRNILRDFDYVEQIARNQFVAREFKARQGRDRI.

The HXXXXD motif motif lies at 275–280 (SHRSYI).

Belongs to the GPAT/DAPAT family.

It localises to the cell membrane. The enzyme catalyses sn-glycerol 3-phosphate + an acyl-CoA = a 1-acyl-sn-glycero-3-phosphate + CoA. It functions in the pathway phospholipid metabolism; CDP-diacylglycerol biosynthesis; CDP-diacylglycerol from sn-glycerol 3-phosphate: step 1/3. The protein is Glycerol-3-phosphate acyltransferase of Mycobacterium bovis (strain BCG / Pasteur 1173P2).